Here is a 248-residue protein sequence, read N- to C-terminus: Transcriptional activator protein FnrL (248 aa).

The 79-residue stretch at 154-232 folds into the HTH crp-type domain; it reads KTAREKIASL…KRHVIVTDFA (79 aa). The H-T-H motif DNA-binding region spans 191–210; it reads REEMADYLGLTLETVSRQVS.

Functionally, anaerobic regulatory protein; transcriptional activator of hemA. Appears to regulate other genes. This Cereibacter sphaeroides (strain ATCC 17023 / DSM 158 / JCM 6121 / CCUG 31486 / LMG 2827 / NBRC 12203 / NCIMB 8253 / ATH 2.4.1.) (Rhodobacter sphaeroides) protein is Transcriptional activator protein FnrL (fnrL).